We begin with the raw amino-acid sequence, 93 residues long: Small ribosomal subunit protein uS19c (93 aa).

The protein belongs to the universal ribosomal protein uS19 family.

Its subcellular location is the plastid. It is found in the chloroplast. Its function is as follows. Protein S19 forms a complex with S13 that binds strongly to the 16S ribosomal RNA. This is Small ribosomal subunit protein uS19c from Stigeoclonium helveticum (Green alga).